A 400-amino-acid chain; its full sequence is NADH-quinone oxidoreductase subunit D (400 aa).

It belongs to the complex I 49 kDa subunit family. As to quaternary structure, NDH-1 is composed of 14 different subunits. Subunits NuoB, C, D, E, F, and G constitute the peripheral sector of the complex.

Its subcellular location is the cell inner membrane. The catalysed reaction is a quinone + NADH + 5 H(+)(in) = a quinol + NAD(+) + 4 H(+)(out). NDH-1 shuttles electrons from NADH, via FMN and iron-sulfur (Fe-S) centers, to quinones in the respiratory chain. The immediate electron acceptor for the enzyme in this species is believed to be a menaquinone. Couples the redox reaction to proton translocation (for every two electrons transferred, four hydrogen ions are translocated across the cytoplasmic membrane), and thus conserves the redox energy in a proton gradient. This chain is NADH-quinone oxidoreductase subunit D, found in Pelodictyon phaeoclathratiforme (strain DSM 5477 / BU-1).